A 425-amino-acid chain; its full sequence is ATP-dependent RNA helicase RhlB (425 aa).

Residues 9–37 (TRFADLALHPKIQQAISSAGFEYCTPIQA) carry the Q motif motif. Residues 40 to 218 (LPVALSNRDV…YEHMNAPTKL (179 aa)) form the Helicase ATP-binding domain. 53–60 (AQTGTGKT) provides a ligand contact to ATP. The short motif at 164-167 (DEAD) is the DEAD box element. The Helicase C-terminal domain occupies 242 to 389 (KFPLLLTLIE…VTKYDGDALL (148 aa)). The disordered stretch occupies residues 391–425 (DLRRPRPIQRRRRHNSGGGKGKPRGRRSGPPRNAS). Positions 395-419 (PRPIQRRRRHNSGGGKGKPRGRRSG) are enriched in basic residues.

It belongs to the DEAD box helicase family. RhlB subfamily. In terms of assembly, component of the RNA degradosome, which is a multiprotein complex involved in RNA processing and mRNA degradation.

The protein resides in the cytoplasm. It carries out the reaction ATP + H2O = ADP + phosphate + H(+). DEAD-box RNA helicase involved in RNA degradation. Has RNA-dependent ATPase activity and unwinds double-stranded RNA. The sequence is that of ATP-dependent RNA helicase RhlB from Idiomarina loihiensis (strain ATCC BAA-735 / DSM 15497 / L2-TR).